We begin with the raw amino-acid sequence, 319 residues long: ATP-dependent 6-phosphofructokinase (319 aa).

Gly-11 serves as a coordination point for ATP. ADP contacts are provided by residues 21 to 25 (RSVVR) and Asp-59. ATP contacts are provided by residues 72 to 73 (RC) and 102 to 105 (GDGS). Asp-103 is a Mg(2+) binding site. Residue 125-127 (TID) coordinates substrate. The active-site Proton acceptor is the Asp-127. Arg-154 is an ADP binding site. Substrate is bound by residues Arg-162 and 169-171 (MGR). ADP-binding positions include 185-187 (GAE), Arg-211, and 213-215 (KKH). Residues Glu-222, Arg-243, and 249-252 (HVQR) each bind substrate.

This sequence belongs to the phosphofructokinase type A (PFKA) family. ATP-dependent PFK group I subfamily. Prokaryotic clade 'B1' sub-subfamily. Homotetramer. It depends on Mg(2+) as a cofactor.

It localises to the cytoplasm. The enzyme catalyses beta-D-fructose 6-phosphate + ATP = beta-D-fructose 1,6-bisphosphate + ADP + H(+). It participates in carbohydrate degradation; glycolysis; D-glyceraldehyde 3-phosphate and glycerone phosphate from D-glucose: step 3/4. Allosterically activated by ADP and other diphosphonucleosides, and allosterically inhibited by phosphoenolpyruvate. Its function is as follows. Catalyzes the phosphorylation of D-fructose 6-phosphate to fructose 1,6-bisphosphate by ATP, the first committing step of glycolysis. This Geobacillus stearothermophilus (Bacillus stearothermophilus) protein is ATP-dependent 6-phosphofructokinase.